A 419-amino-acid chain; its full sequence is Enolase (419 aa).

Q161 contacts (2R)-2-phosphoglycerate. E205 acts as the Proton donor in catalysis. Mg(2+) is bound by residues D240, E283, and D309. Residues K334, R363, S364, and K385 each contribute to the (2R)-2-phosphoglycerate site. Catalysis depends on K334, which acts as the Proton acceptor.

The protein belongs to the enolase family. Mg(2+) is required as a cofactor.

It is found in the cytoplasm. Its subcellular location is the secreted. It localises to the cell surface. The enzyme catalyses (2R)-2-phosphoglycerate = phosphoenolpyruvate + H2O. The protein operates within carbohydrate degradation; glycolysis; pyruvate from D-glyceraldehyde 3-phosphate: step 4/5. Its function is as follows. Catalyzes the reversible conversion of 2-phosphoglycerate (2-PG) into phosphoenolpyruvate (PEP). It is essential for the degradation of carbohydrates via glycolysis. The sequence is that of Enolase from Saccharolobus islandicus (strain Y.N.15.51 / Yellowstone #2) (Sulfolobus islandicus).